Consider the following 130-residue polypeptide: Small ribosomal subunit protein uS11 (130 aa).

Belongs to the universal ribosomal protein uS11 family. As to quaternary structure, part of the 30S ribosomal subunit. Interacts with proteins S7 and S18. Binds to IF-3.

Its function is as follows. Located on the platform of the 30S subunit, it bridges several disparate RNA helices of the 16S rRNA. Forms part of the Shine-Dalgarno cleft in the 70S ribosome. The protein is Small ribosomal subunit protein uS11 of Shewanella denitrificans (strain OS217 / ATCC BAA-1090 / DSM 15013).